The sequence spans 361 residues: Putative dual-specificity RNA methyltransferase RlmN (361 aa).

Glu91 functions as the Proton acceptor in the catalytic mechanism. In terms of domain architecture, Radical SAM core spans 97-329 (QHYGLSVCVT…KKKGVNCVVR (233 aa)). Cys111, Cys115, and Cys118 together coordinate [4Fe-4S] cluster. S-adenosyl-L-methionine is bound by residues 163–164 (GE), Ser195, 218–220 (SLH), and Thr296.

Belongs to the radical SAM superfamily. RlmN family. [4Fe-4S] cluster serves as cofactor.

The protein localises to the cytoplasm. It catalyses the reaction adenosine(2503) in 23S rRNA + 2 reduced [2Fe-2S]-[ferredoxin] + 2 S-adenosyl-L-methionine = 2-methyladenosine(2503) in 23S rRNA + 5'-deoxyadenosine + L-methionine + 2 oxidized [2Fe-2S]-[ferredoxin] + S-adenosyl-L-homocysteine. The catalysed reaction is adenosine(37) in tRNA + 2 reduced [2Fe-2S]-[ferredoxin] + 2 S-adenosyl-L-methionine = 2-methyladenosine(37) in tRNA + 5'-deoxyadenosine + L-methionine + 2 oxidized [2Fe-2S]-[ferredoxin] + S-adenosyl-L-homocysteine. Its function is as follows. Specifically methylates position 2 of adenine 2503 in 23S rRNA and position 2 of adenine 37 in tRNAs. This Streptococcus pneumoniae (strain CGSP14) protein is Putative dual-specificity RNA methyltransferase RlmN.